The primary structure comprises 435 residues: Serine hydroxymethyltransferase 2 (435 aa).

(6S)-5,6,7,8-tetrahydrofolate contacts are provided by residues Leu-135 and 139–141; that span reads GHL. Lys-244 is modified (N6-(pyridoxal phosphate)lysine). Position 260 (Glu-260) interacts with (6S)-5,6,7,8-tetrahydrofolate.

The protein belongs to the SHMT family. Homodimer. The cofactor is pyridoxal 5'-phosphate.

Its subcellular location is the cytoplasm. It catalyses the reaction (6R)-5,10-methylene-5,6,7,8-tetrahydrofolate + glycine + H2O = (6S)-5,6,7,8-tetrahydrofolate + L-serine. It participates in one-carbon metabolism; tetrahydrofolate interconversion. It functions in the pathway amino-acid biosynthesis; glycine biosynthesis; glycine from L-serine: step 1/1. Catalyzes the reversible interconversion of serine and glycine with tetrahydrofolate (THF) serving as the one-carbon carrier. This reaction serves as the major source of one-carbon groups required for the biosynthesis of purines, thymidylate, methionine, and other important biomolecules. Also exhibits THF-independent aldolase activity toward beta-hydroxyamino acids, producing glycine and aldehydes, via a retro-aldol mechanism. The protein is Serine hydroxymethyltransferase 2 of Vibrio cholerae serotype O1 (strain ATCC 39315 / El Tor Inaba N16961).